A 412-amino-acid polypeptide reads, in one-letter code: Major facilitator superfamily domain-containing protein 3 (412 aa).

12 consecutive transmembrane segments (helical) span residues 10-30, 40-60, 73-93, 94-114, 138-158, 166-186, 209-229, 250-270, 291-311, 321-341, 361-381, and 384-404; these read GLYL…PVLL, VGLA…APLV, STAG…PGAG, QAGL…GAAM, VQVV…LALL, LFLL…AAPA, VLAV…KLGE, LGLW…SLGG, LGGL…GASM, ALLS…VTFT, LLAT…GGLA, and LGPH…VLYL.

The protein belongs to the major facilitator superfamily.

The protein localises to the membrane. The sequence is that of Major facilitator superfamily domain-containing protein 3 (MFSD3) from Homo sapiens (Human).